The primary structure comprises 91 residues: Small ribosomal subunit protein uS19 (91 aa).

Belongs to the universal ribosomal protein uS19 family.

Protein S19 forms a complex with S13 that binds strongly to the 16S ribosomal RNA. The sequence is that of Small ribosomal subunit protein uS19 from Pseudoalteromonas atlantica (strain T6c / ATCC BAA-1087).